The chain runs to 461 residues: Probable lipid II flippase MurJ (461 aa).

The next 12 helical transmembrane spans lie at 5–25 (ILGA…PNLF), 51–71 (FASL…LLVA), 96–116 (IVAI…LGAL), 123–143 (FFAS…ALLI), 156–176 (LSYG…YPLV), 229–249 (IASF…VSYL), 258–278 (LPLA…IAIA), 293–313 (KAWF…IMLS), 337–357 (VFSL…FSLW), 372–392 (LISL…LGVL), 402–422 (GLFL…LGII), and 429–449 (LVIL…KSWV).

Belongs to the MurJ/MviN family.

It localises to the cell inner membrane. The protein operates within cell wall biogenesis; peptidoglycan biosynthesis. In terms of biological role, involved in peptidoglycan biosynthesis. Transports lipid-linked peptidoglycan precursors from the inner to the outer leaflet of the cytoplasmic membrane. This Helicobacter pylori (strain ATCC 700392 / 26695) (Campylobacter pylori) protein is Probable lipid II flippase MurJ.